The primary structure comprises 144 residues: Ribonuclease P protein subunit RPR2 (144 aa).

Positions 1 to 22 (MGKKAHGGKMKPEIDENGTLLV) are disordered. Residues cysteine 90, cysteine 93, cysteine 115, and cysteine 117 each coordinate Zn(2+).

Belongs to the eukaryotic/archaeal RNase P protein component 4 family. As to quaternary structure, component of nuclear RNase P. RNase P consists of an RNA moiety and at least 9 protein subunits including POP1, POP3, POP4, POP5, POP6, POP7, POP8, RPP1 and RPR2, many of which are shared with the RNase MPR complex. It depends on Zn(2+) as a cofactor.

The protein resides in the nucleus. The enzyme catalyses Endonucleolytic cleavage of RNA, removing 5'-extranucleotides from tRNA precursor.. Functionally, component of ribonuclease P, a protein complex that generates mature tRNA molecules by cleaving their 5'-ends. This is Ribonuclease P protein subunit RPR2 (RPR2) from Saccharomyces cerevisiae (strain ATCC 204508 / S288c) (Baker's yeast).